A 514-amino-acid polypeptide reads, in one-letter code: MVLDLDLFRVDKGGDPALIRESQEKRFKDPGLVDQLVKADSEWRRCRFRADNLNKLKNLCSKTIGEKMKKKEPVGNDESIPEDVLNLDDLTADTLTNLKVSQIKKVRLLVDEAILKCDAERIKLEAERFESLREIGNLLHPSVPISDDEDADNKVERIWGDCTVRKKYSHVDLVVMVDGFEGEKGAVVAGSRGYFLKGVLVFLEQALIQFALRTLASRGYTPIYTPFFMRKEVMQEVAQLSQFDEELYKVIGKGSEKSDDNSYEEKYLIATSEQPIAALHRDEWLRPEDLPIKYAGLSTCFRQEVGSHGRDTRGIFRVHQFEKIEQFVYSSPHDNKSWEMFEEMIATAEEFYQSLGIPYHIVNIVSGSLNHAASKKLDLEAWFPGSGAFRELVSCSNCTDYQARRLRIRYGQTKKMMDKVEFVHMLNATMCATTRTICAILENYQTEKGILVPEKLKEFMPPGLQELIPFVKAAPIDQEPSKKQKKQHEGSKKKGAARDVALESQLQNMEVTDA.

N-acetylmethionine is present on Met-1. The interaction with tRNA stretch occupies residues 9–61; sequence RVDKGGDPALIRESQEKRFKDPGLVDQLVKADSEWRRCRFRADNLNKLKNLCS. Phosphoserine is present on Ser-241. L-serine-binding residues include Thr-271 and Arg-302. Residues 302 to 304 and 318 to 321 contribute to the ATP site; these read RQE and VHQF. N6-acetyllysine is present on Lys-323. An L-serine-binding site is contributed by Glu-325. Residue 391–394 coordinates ATP; sequence ELVS. Asn-427 provides a ligand contact to L-serine. Positions 475 to 514 are disordered; that stretch reads PIDQEPSKKQKKQHEGSKKKGAARDVALESQLQNMEVTDA. Residues 479-501 are compositionally biased toward basic and acidic residues; the sequence is EPSKKQKKQHEGSKKKGAARDVA. Residues 482–494 carry the Nuclear localization signal motif; the sequence is KKQKKQHEGSKKK. Residues 504 to 514 show a composition bias toward polar residues; the sequence is SQLQNMEVTDA.

It belongs to the class-II aminoacyl-tRNA synthetase family. Type-1 seryl-tRNA synthetase subfamily. In terms of assembly, homodimer. The tRNA molecule may bind across the dimer. Interacts with SIRT2. Interacts with METTL6; interaction is required for the tRNA N(3)-methylcytidine methyltransferase activity of METTL6.

The protein localises to the cytoplasm. It is found in the nucleus. It carries out the reaction tRNA(Ser) + L-serine + ATP = L-seryl-tRNA(Ser) + AMP + diphosphate + H(+). The catalysed reaction is tRNA(Sec) + L-serine + ATP = L-seryl-tRNA(Sec) + AMP + diphosphate + H(+). It participates in aminoacyl-tRNA biosynthesis; selenocysteinyl-tRNA(Sec) biosynthesis; L-seryl-tRNA(Sec) from L-serine and tRNA(Sec): step 1/1. Functionally, catalyzes the attachment of serine to tRNA(Ser) in a two-step reaction: serine is first activated by ATP to form Ser-AMP and then transferred to the acceptor end of tRNA(Ser). Is probably also able to aminoacylate tRNA(Sec) with serine, to form the misacylated tRNA L-seryl-tRNA(Sec), which will be further converted into selenocysteinyl-tRNA(Sec). In the nucleus, binds to the VEGFA core promoter and prevents MYC binding and transcriptional activation by MYC. Recruits SIRT2 to the VEGFA promoter, promoting deacetylation of histone H4 at 'Lys-16' (H4K16). Thereby, inhibits the production of VEGFA and sprouting angiogenesis mediated by VEGFA. This is Serine--tRNA ligase, cytoplasmic (SARS1) from Bos taurus (Bovine).